The primary structure comprises 124 residues: Cytochrome c2 (124 aa).

Q1 carries the post-translational modification Pyrrolidone carboxylic acid. C16, C19, H20, and M85 together coordinate heme c.

It belongs to the cytochrome c family. Post-translationally, binds 1 heme c group covalently per subunit.

Its subcellular location is the periplasm. Its function is as follows. Cytochrome c2 is found mainly in purple, non-sulfur, photosynthetic bacteria where it functions as the electron donor to the oxidized bacteriochlorophyll in the photophosphorylation pathway. However, it may also have a role in the respiratory chain and is found in some non-photosynthetic bacteria. The polypeptide is Cytochrome c2 (Afifella marina (Rhodobium marinum)).